The following is a 62-amino-acid chain: UPF0339 protein Atu5359 (62 aa).

This sequence belongs to the UPF0339 family.

This is UPF0339 protein Atu5359 from Agrobacterium fabrum (strain C58 / ATCC 33970) (Agrobacterium tumefaciens (strain C58)).